The following is a 629-amino-acid chain: MQTYDAGTFDVIVVGAGHAGVEAGLASGRMGAKTLMLTINLDMVAFMPCNPSVGGPAKGVVVREIDALGGEMGRNTDKTYIQMRMLNTGKGPAVRALRAQADKWDYQHEMKHTIEKEENITLRQGLVDHLVIEDGVCKGVITNSGAIYYAKTVVITTGTFSRGEIIVGELRYSSGPNNQQPSVKLSEHLEELGFELRRFKTGTPPRVKSSTIDYSKTEEQPGDDHPRAFSFDTVDMMLDQLPCWLTYTNETTHEIIQANLHRSPMFTATKKGTGARYCPSIEDKIVRFSDKPRHQIFLEPEGKNTEEVYVQGLSTSLPEEVQREMLRTIPGLENVEMMRVGYAIEYDAVMPDQLWPSLETKLVEGLFTAGQINGTSGYEEAAGQGLMAGINAARKVFDKEPIILGRDQAYIGVLIDDLVTKGTEEPYRLLTSRAEYRLLLRHDNADLRLTEIGHEIGLISDERYERFLAKQSAIEAEKERLQKTRIKPTAEVQAMLKEIGSGELKDGILAADLLRRPEITYDKIAQIVSRETFITDEIAEQVEIQVKYEGYIQKSNLQVEKMKRMEDKKIPENIDYDAISGLATEALEKLKKIEPLSIAQASRISGVNPADISILLVYIEQGKIAKISK.

FAD is bound by residues 15 to 20 (GAGHAG), V127, and S182. Residues 203-227 (TPPRVKSSTIDYSKTEEQPGDDHPR) form a disordered region. Residues 215-227 (SKTEEQPGDDHPR) show a composition bias toward basic and acidic residues. 274–288 (GARYCPSIEDKIVRF) is a binding site for NAD(+). Position 371 (Q371) interacts with FAD.

This sequence belongs to the MnmG family. As to quaternary structure, homodimer. Heterotetramer of two MnmE and two MnmG subunits. It depends on FAD as a cofactor.

The protein localises to the cytoplasm. In terms of biological role, NAD-binding protein involved in the addition of a carboxymethylaminomethyl (cmnm) group at the wobble position (U34) of certain tRNAs, forming tRNA-cmnm(5)s(2)U34. The polypeptide is tRNA uridine 5-carboxymethylaminomethyl modification enzyme MnmG (Listeria welshimeri serovar 6b (strain ATCC 35897 / DSM 20650 / CCUG 15529 / CIP 8149 / NCTC 11857 / SLCC 5334 / V8)).